Here is a 662-residue protein sequence, read N- to C-terminus: ATP-dependent zinc metalloprotease FtsH (662 aa).

The segment covering 1-15 (MSENPVKRPGKDGSR) has biased composition (basic and acidic residues). The segment at 1–35 (MSENPVKRPGKDGSRNKFKPVQEEGGTPGWFRSKG) is disordered. Residues 1-39 (MSENPVKRPGKDGSRNKFKPVQEEGGTPGWFRSKGESPQ) are Cytoplasmic-facing. A helical transmembrane segment spans residues 40–60 (GKFPGFLLFLMAGLLMLFVFL). Over 61–154 (RFFSGTDAPE…LKVEKGSSDL (94 aa)) the chain is Periplasmic. Residues 155 to 175 (NTFLALFAPWIIFAALYFFLF) traverse the membrane as a helical segment. The Cytoplasmic portion of the chain corresponds to 176 to 662 (RRMSGQNGAQ…QGALPNPVTA (487 aa)). 250–257 (GPPGTGKT) contributes to the ATP binding site. His-472 provides a ligand contact to Zn(2+). Residue Glu-473 is part of the active site. Positions 476 and 548 each coordinate Zn(2+).

The protein in the central section; belongs to the AAA ATPase family. This sequence in the C-terminal section; belongs to the peptidase M41 family. In terms of assembly, homohexamer. Zn(2+) serves as cofactor.

The protein localises to the cell inner membrane. Its function is as follows. Acts as a processive, ATP-dependent zinc metallopeptidase for both cytoplasmic and membrane proteins. Plays a role in the quality control of integral membrane proteins. In Pelodictyon phaeoclathratiforme (strain DSM 5477 / BU-1), this protein is ATP-dependent zinc metalloprotease FtsH.